The following is a 741-amino-acid chain: Phosphoribosylformylglycinamidine synthase subunit PurL (741 aa).

The active site involves H53. Residues Y56 and K95 each coordinate ATP. E97 contributes to the Mg(2+) binding site. Residues 98 to 101 (SHNH) and R120 contribute to the substrate site. Catalysis depends on H99, which acts as the Proton acceptor. Residue D121 coordinates Mg(2+). Q244 is a binding site for substrate. Residue D274 coordinates Mg(2+). 318–320 (ESQ) lines the substrate pocket. Positions 501 and 538 each coordinate ATP. N539 contacts Mg(2+). Substrate is bound at residue S541.

It belongs to the FGAMS family. As to quaternary structure, monomer. Part of the FGAM synthase complex composed of 1 PurL, 1 PurQ and 2 PurS subunits.

It localises to the cytoplasm. The catalysed reaction is N(2)-formyl-N(1)-(5-phospho-beta-D-ribosyl)glycinamide + L-glutamine + ATP + H2O = 2-formamido-N(1)-(5-O-phospho-beta-D-ribosyl)acetamidine + L-glutamate + ADP + phosphate + H(+). It functions in the pathway purine metabolism; IMP biosynthesis via de novo pathway; 5-amino-1-(5-phospho-D-ribosyl)imidazole from N(2)-formyl-N(1)-(5-phospho-D-ribosyl)glycinamide: step 1/2. In terms of biological role, part of the phosphoribosylformylglycinamidine synthase complex involved in the purines biosynthetic pathway. Catalyzes the ATP-dependent conversion of formylglycinamide ribonucleotide (FGAR) and glutamine to yield formylglycinamidine ribonucleotide (FGAM) and glutamate. The FGAM synthase complex is composed of three subunits. PurQ produces an ammonia molecule by converting glutamine to glutamate. PurL transfers the ammonia molecule to FGAR to form FGAM in an ATP-dependent manner. PurS interacts with PurQ and PurL and is thought to assist in the transfer of the ammonia molecule from PurQ to PurL. The protein is Phosphoribosylformylglycinamidine synthase subunit PurL of Ligilactobacillus salivarius (strain UCC118) (Lactobacillus salivarius).